An 847-amino-acid chain; its full sequence is Pep5-like zinc finger protein C16A10.03c (847 aa).

A CHCR repeat occupies Y387 to M526. An RING-type; atypical zinc finger spans residues C780–K814.

The protein localises to the cytoplasm. The protein resides in the nucleus. This chain is Pep5-like zinc finger protein C16A10.03c, found in Schizosaccharomyces pombe (strain 972 / ATCC 24843) (Fission yeast).